A 58-amino-acid chain; its full sequence is Leucine zipper protein 6 (58 aa).

Widely expressed, highest levels found in brain, placenta, spleen, testis, and ovary. Up-regulated in some tumor cells.

The protein is Leucine zipper protein 6 (LUZP6) of Homo sapiens (Human).